We begin with the raw amino-acid sequence, 379 residues long: Demethylspheroidene O-methyltransferase (379 aa).

Residues Asp-235 and Arg-279 each coordinate S-adenosyl-L-methionine.

The protein belongs to the class I-like SAM-binding methyltransferase superfamily. Cation-independent O-methyltransferase family.

It carries out the reaction demethylspheroidene + S-adenosyl-L-methionine = spheroidene + S-adenosyl-L-homocysteine + H(+). It participates in carotenoid biosynthesis; spheroidene biosynthesis. In terms of biological role, methyltransferase that mediates the O-methylation of 1-hydroxy carotenoids. Converts hydroxyneurosporene to methoxyneurosporene or demethylspheroidene to spheroidene. Also able to produce spirilloxanthin. The chain is Demethylspheroidene O-methyltransferase (crtF) from Cereibacter sphaeroides (strain ATCC 17023 / DSM 158 / JCM 6121 / CCUG 31486 / LMG 2827 / NBRC 12203 / NCIMB 8253 / ATH 2.4.1.) (Rhodobacter sphaeroides).